Consider the following 246-residue polypeptide: Glutamate/aspartate import permease protein GltJ (246 aa).

An ABC transmembrane type-1 domain is found at 29–230; sequence FQVTIALSIC…LINAFIMLVM (202 aa). A run of 5 helical transmembrane segments spans residues 33-53, 74-94, 104-124, 179-196, and 212-232; these read IALS…FGIL, NVPL…LLPE, LDPN…FTAA, LVKN…DMAA, and FTAI…VMTL.

This sequence belongs to the binding-protein-dependent transport system permease family. HisMQ subfamily. As to quaternary structure, the complex is composed of two ATP-binding proteins (GltL), two transmembrane proteins (GltJ and GltK) and a solute-binding protein (GltI).

It localises to the cell inner membrane. Functionally, part of the ABC transporter complex GltIJKL involved in glutamate and aspartate uptake. Probably responsible for the translocation of the substrate across the membrane. The protein is Glutamate/aspartate import permease protein GltJ (gltJ) of Escherichia coli O6:H1 (strain CFT073 / ATCC 700928 / UPEC).